The sequence spans 149 residues: Large ribosomal subunit protein eL19 (149 aa).

The interval 46-99 is disordered; it reads EDGTIEAKTAKGNSRGRARKRQQKRAYGHKKGHGSRKGRSGGRQNEKEDWQSRI. Residues 59–85 are compositionally biased toward basic residues; it reads SRGRARKRQQKRAYGHKKGHGSRKGRS. A compositionally biased stretch (basic and acidic residues) spans 89–99; sequence QNEKEDWQSRI.

The protein belongs to the eukaryotic ribosomal protein eL19 family. Part of the 50S ribosomal subunit.

In terms of biological role, binds to the 23S rRNA. In Natronomonas pharaonis (strain ATCC 35678 / DSM 2160 / CIP 103997 / JCM 8858 / NBRC 14720 / NCIMB 2260 / Gabara) (Halobacterium pharaonis), this protein is Large ribosomal subunit protein eL19.